Reading from the N-terminus, the 511-residue chain is Histidine ammonia-lyase (511 aa).

The segment at residues 143 to 145 (ASG) is a cross-link (5-imidazolinone (Ala-Gly)). The residue at position 144 (S144) is a 2,3-didehydroalanine (Ser).

The protein belongs to the PAL/histidase family. Post-translationally, contains an active site 4-methylidene-imidazol-5-one (MIO), which is formed autocatalytically by cyclization and dehydration of residues Ala-Ser-Gly.

Its subcellular location is the cytoplasm. The enzyme catalyses L-histidine = trans-urocanate + NH4(+). Its pathway is amino-acid degradation; L-histidine degradation into L-glutamate; N-formimidoyl-L-glutamate from L-histidine: step 1/3. This Vibrio parahaemolyticus serotype O3:K6 (strain RIMD 2210633) protein is Histidine ammonia-lyase.